Here is a 452-residue protein sequence, read N- to C-terminus: Phosphoglucosamine mutase (452 aa).

Serine 108 serves as the catalytic Phosphoserine intermediate. Residues serine 108, aspartate 247, aspartate 249, and aspartate 251 each contribute to the Mg(2+) site. Phosphoserine is present on serine 108.

The protein belongs to the phosphohexose mutase family. The cofactor is Mg(2+). Activated by phosphorylation.

The enzyme catalyses alpha-D-glucosamine 1-phosphate = D-glucosamine 6-phosphate. Catalyzes the conversion of glucosamine-6-phosphate to glucosamine-1-phosphate. This is Phosphoglucosamine mutase from Burkholderia pseudomallei (strain 668).